Consider the following 941-residue polypeptide: Cilia- and flagella-associated protein 69 (941 aa).

Over residues 1–14 the composition is skewed to low complexity; that stretch reads MWTEEAGATAEAQE. The tract at residues 1–26 is disordered; the sequence is MWTEEAGATAEAQESGIRNKSSSSSQ. Polar residues predominate over residues 16–26; sequence GIRNKSSSSSQ.

In terms of tissue distribution, highly expressed in the testis, specifically in sperm (at protein level). Expressed in the brain, kidney, liver, lung, and intestine.

Its subcellular location is the cell projection. The protein resides in the cilium. The protein localises to the flagellum. Cilium- and flagellum-associated protein. In the olfactory epithelium, regulates the speed of activation and termination of the odor response and thus contributes to the robustness of olfactory transduction pathways. Required for sperm flagellum assembly and stability. The protein is Cilia- and flagella-associated protein 69 of Homo sapiens (Human).